Consider the following 237-residue polypeptide: Endonuclease NucS (237 aa).

It belongs to the NucS endonuclease family.

It localises to the cytoplasm. Its function is as follows. Cleaves both 3' and 5' ssDNA extremities of branched DNA structures. In Saccharolobus islandicus (strain L.S.2.15 / Lassen #1) (Sulfolobus islandicus), this protein is Endonuclease NucS.